Reading from the N-terminus, the 1129-residue chain is PAN2-PAN3 deadenylation complex catalytic subunit PAN2 (1129 aa).

WD repeat units follow at residues 20–60, 104–146, 148–183, 186–226, and 280–319; these read PPAV…YTSY, PDFK…DTLP, DAQY…VIKV, GHTG…FSLK, and LYDS…HFPE. Residues 320-457 form a linker region; that stretch reads YSNPTEFADH…DLHLDDVTRK (138 aa). Residues 396–427 are disordered; it reads RTKRRNQIEVTRQTDRSSDSLTPPKFLSEKSR. The 373-residue stretch at 458 to 830 folds into the USP domain; the sequence is DVPAMYGNVE…LPSVLTFQTK (373 aa). The Exonuclease domain occupies 880–1052; sequence VAIDAEFIRL…IEDATTALKL (173 aa). A divalent metal cation-binding residues include D883, E885, D992, and D1045. A disordered region spans residues 1083–1129; it reads APGSGNRNSMPAGMTATGAGRDTPEPMTTPKKGGAFGGVGFRSPMRR.

It belongs to the peptidase C19 family. PAN2 subfamily. In terms of assembly, forms a heterotrimer with an asymmetric homodimer of the regulatory subunit PAN3 to form the poly(A)-nuclease (PAN) deadenylation complex. A divalent metal cation is required as a cofactor.

The protein resides in the cytoplasm. The enzyme catalyses Exonucleolytic cleavage of poly(A) to 5'-AMP.. With respect to regulation, positively regulated by the regulatory subunit PAN3. Catalytic subunit of the poly(A)-nuclease (PAN) deadenylation complex, one of two cytoplasmic mRNA deadenylases involved in mRNA turnover. PAN specifically shortens poly(A) tails of RNA and the activity is stimulated by poly(A)-binding protein PAB1. PAN deadenylation is followed by rapid degradation of the shortened mRNA tails by the CCR4-NOT complex. Deadenylated mRNAs are then degraded by two alternative mechanisms, namely exosome-mediated 3'-5' exonucleolytic degradation, or deadenylation-dependent mRNA decaping and subsequent 5'-3' exonucleolytic degradation by XRN1. May also be involved in post-transcriptional maturation of mRNA poly(A) tails. This Phaeosphaeria nodorum (strain SN15 / ATCC MYA-4574 / FGSC 10173) (Glume blotch fungus) protein is PAN2-PAN3 deadenylation complex catalytic subunit PAN2.